The following is a 350-amino-acid chain: Beta-ketodecanoyl-[acyl-carrier-protein] synthase (350 aa).

Cysteine 133 is an active-site residue.

It belongs to the thiolase-like superfamily. Beta-ketoacyl-ACP synthases family.

The catalysed reaction is octanoyl-CoA + malonyl-[ACP] + H(+) = 3-oxodecanoyl-[ACP] + CO2 + CoA. It participates in lipid metabolism; fatty acid biosynthesis. In terms of biological role, catalyzes the condensation of octanoyl-CoA, obtained from exogenously supplied fatty acids via beta-oxidation, with malonyl-[acyl-carrier protein], forming 3-oxodecanoyl-[acyl-carrier protein], an intermediate of the fatty acid elongation cycle that can then be extended to supply all of the cellular fatty acid needs. The enzyme thereby shunts fatty acid degradation intermediates from the beta-oxidation pathway into de novo fatty acid biosynthesis. The sequence is that of Beta-ketodecanoyl-[acyl-carrier-protein] synthase from Pseudomonas aeruginosa (strain ATCC 15692 / DSM 22644 / CIP 104116 / JCM 14847 / LMG 12228 / 1C / PRS 101 / PAO1).